The sequence spans 369 residues: CASP-like protein 4U1 (369 aa).

The disordered stretch occupies residues 1–162; sequence MASTPRTPAP…RAETKLPLSS (162 aa). The Cytoplasmic portion of the chain corresponds to 1 to 222; that stretch reads MASTPRTPAP…AVAAVAERRE (222 aa). Residues 7–23 show a composition bias toward pro residues; it reads TPAPERSPPPVPTPPPP. The segment covering 36–51 has biased composition (basic and acidic residues); sequence SPREEASFSSDGREGA. Composition is skewed to low complexity over residues 87-96 and 114-127; these read ANKAAAATAE and SSQT…SPTP. A helical transmembrane segment spans residues 223–243; sequence LLLALRLATAVLSLAAFSVIA. Residues 244–262 are Extracellular-facing; the sequence is SARTSGWAGDYYARHLQYR. The helical transmembrane segment at 263–283 threads the bilayer; that stretch reads YAVAVNVIVFAYSVAQSLGKI. Over 284-300 the chain is Cytoplasmic; it reads RHLVSPRFTFRTMSSYY. Residues 301–321 form a helical membrane-spanning segment; the sequence is CSLFLDQVLAYLLMSASSAAA. Residues 322–339 are Extracellular-facing; sequence SRNDLWVSRFGTDAFVRK. The chain crosses the membrane as a helical span at residues 340 to 360; the sequence is ITGALWLSFVAFLVLALNAVI. The Cytoplasmic portion of the chain corresponds to 361 to 369; the sequence is SXANLFSMV.

The protein belongs to the Casparian strip membrane proteins (CASP) family. As to quaternary structure, homodimer and heterodimers.

It is found in the cell membrane. The sequence is that of CASP-like protein 4U1 from Zea mays (Maize).